Consider the following 119-residue polypeptide: Defensin-like protein 260 (119 aa).

An N-terminal signal peptide occupies residues 1-24 (MKIASLKLLLLVSLLFAVTQNGIS). 4 cysteine pairs are disulfide-bonded: Cys44–Cys99, Cys63–Cys79, Cys69–Cys83, and Cys73–Cys85.

It belongs to the DEFL family.

It localises to the secreted. In Arabidopsis thaliana (Mouse-ear cress), this protein is Defensin-like protein 260.